The primary structure comprises 606 residues: Methionine--tRNA ligase (606 aa).

The 'HIGH' region motif lies at 14–24 (PYANGPRHIGH). Zn(2+) is bound by residues Cys-146, Cys-149, Cys-159, and Cys-162. The 'KMSKS' region signature appears at 351–355 (KFSSS). Ser-354 is a binding site for ATP.

The protein belongs to the class-I aminoacyl-tRNA synthetase family. MetG type 1 subfamily. Monomer. It depends on Zn(2+) as a cofactor.

Its subcellular location is the cytoplasm. It catalyses the reaction tRNA(Met) + L-methionine + ATP = L-methionyl-tRNA(Met) + AMP + diphosphate. Its function is as follows. Is required not only for elongation of protein synthesis but also for the initiation of all mRNA translation through initiator tRNA(fMet) aminoacylation. In Thermobifida fusca (strain YX), this protein is Methionine--tRNA ligase.